The chain runs to 563 residues: Beta-catenin-like protein 1 (563 aa).

Met1 is modified (N-acetylmethionine). The tract at residues 1–49 (MDVGELLSYQPNRGTKRPRDDEEEEQKMRRKQTGTRERGRYREEEMTVV) is disordered. The Nuclear localization signal motif lies at 16 to 33 (KRPRDDEEEEQKMRRKQT). A compositionally biased stretch (basic and acidic residues) spans 34-45 (GTRERGRYREEE). HEAT repeat units lie at residues 79 to 129 (ESSV…VVAT) and 134 to 176 (YHLL…TLHE). N6-acetyllysine is present on Lys91. A Nuclear export signal (NES) motif is present at residues 130 to 140 (MPDLYHLLVEL). ARM repeat units lie at residues 178-228 (EEGA…MAEF), 229-273 (RPEM…LQDN), 274-323 (DENR…CLML), 325-363 (SNRE…AMIG), and 364-417 (PEGT…LLRN). At Ser389 the chain carries Phosphoserine. A coiled-coil region spans residues 476 to 540 (DTEEEFYLRR…HIIKEYAENI (65 aa)). At Ser545 the chain carries Phosphoserine.

As to quaternary structure, component of the PRP19-CDC5L splicing complex composed of a core complex comprising a homotetramer of PRPF19, CDC5L, PLRG1 and BCAS2, and at least three less stably associated proteins CTNNBL1, CWC15 and HSPA8. Interacts directly with CWC15 and CDC5L in the complex. Interacts with AICDA; the interaction is important for the antibody diversification activity of AICDA. Interacts with PRPF31 (via its NLS). Interacts (via its N-terminal NLS) with KPNA1 and KPNA2. In terms of tissue distribution, widely expressed with highest levels in skeletal muscle, placenta, heart, spleen, testis and thyroid.

The protein localises to the nucleus. Its subcellular location is the cytoplasm. Its function is as follows. Component of the PRP19-CDC5L complex that forms an integral part of the spliceosome and is required for activating pre-mRNA splicing. Participates in AID/AICDA-mediated somatic hypermutation (SHM) and class-switch recombination (CSR), 2 processes resulting in the production of high-affinity, mutated isotype-switched antibodies. This is Beta-catenin-like protein 1 (CTNNBL1) from Homo sapiens (Human).